The following is a 237-amino-acid chain: Pyrimidine 5'-nucleotidase PynA (237 aa).

Asp-9 acts as the Nucleophile in catalysis. Asp-9, Asp-11, and Asp-181 together coordinate Mg(2+). The Proton donor role is filled by Asp-11.

The protein belongs to the HAD-like hydrolase superfamily. YjjG family. In terms of assembly, homodimer. Mg(2+) is required as a cofactor. It depends on Mn(2+) as a cofactor.

The protein localises to the cytoplasm. The catalysed reaction is a ribonucleoside 5'-phosphate + H2O = a ribonucleoside + phosphate. In terms of biological role, nucleotidase that shows high phosphatase activity toward non-canonical pyrimidine nucleotides and three canonical nucleoside 5'-monophosphates (UMP, dUMP and dTMP), and no activity against IMP, UDP, GMP, AMP, UTP or pNPP. Appears to function as a house-cleaning nucleotidase in vivo, since the general nucleotidase activity of it allows it to protect cells against non-canonical pyrimidine derivatives such as 5-fluoro-2'-deoxyuridine monophosphate (5-FdUMP), and prevents the incorporation of potentially mutagenic nucleotides such as 5-bromo-2'-deoxyuridine (5-BrdU) into DNA. Is strictly specific to pyrimidine substrates with 5'-monophosphates and shows no activity against nucleoside di- and triphosphates. The protein is Pyrimidine 5'-nucleotidase PynA of Streptococcus pneumoniae (strain ATCC BAA-255 / R6).